Here is a 205-residue protein sequence, read N- to C-terminus: MKLNKKHLVAILSVLSLSIIVVPLLTSCTGDIPELNPAEIINTLFPNVWVFIAQVIAMCVVFSLVLWLVWKPTNKMLDKRREYIAKEITDAENAKQEALQYLENAKSEHLAAQAQTLEIIAKAKSESLTLRESLEKEAREAADKIISSAKISIANERRENLERLQSEAREAAYIAAEALMKKELSREDNDKLVDQFIKELENNEK.

An N-terminal signal peptide occupies residues 1–27 (MKLNKKHLVAILSVLSLSIIVVPLLTS). Residue Cys28 is the site of N-palmitoyl cysteine attachment. Cys28 is lipidated: S-diacylglycerol cysteine. Residues 48-68 (VWVFIAQVIAMCVVFSLVLWL) traverse the membrane as a helical segment.

Belongs to the ATPase B chain family. F-type ATPases have 2 components, F(1) - the catalytic core - and F(0) - the membrane proton channel. F(1) has five subunits: alpha(3), beta(3), gamma(1), delta(1), epsilon(1). F(0) has three main subunits: a(1), b(2) and c(10-14). The alpha and beta chains form an alternating ring which encloses part of the gamma chain. F(1) is attached to F(0) by a central stalk formed by the gamma and epsilon chains, while a peripheral stalk is formed by the delta and b chains.

It localises to the cell membrane. In terms of biological role, f(1)F(0) ATP synthase produces ATP from ADP in the presence of a proton or sodium gradient. F-type ATPases consist of two structural domains, F(1) containing the extramembraneous catalytic core and F(0) containing the membrane proton channel, linked together by a central stalk and a peripheral stalk. During catalysis, ATP synthesis in the catalytic domain of F(1) is coupled via a rotary mechanism of the central stalk subunits to proton translocation. Functionally, component of the F(0) channel, it forms part of the peripheral stalk, linking F(1) to F(0). In Ureaplasma parvum serovar 3 (strain ATCC 27815 / 27 / NCTC 11736), this protein is ATP synthase subunit b.